We begin with the raw amino-acid sequence, 366 residues long: tRNA (guanine(26)-N(2))-dimethyltransferase (366 aa).

The interval 1-28 is disordered; it reads MEVSEGSVTVEVPEERHGASEGSGEGVF. Residues 1 to 365 enclose the Trm1 methyltransferase domain; it reads MEVSEGSVTV…ADVADIRNAV (365 aa). Arg37, Arg64, and Asp79 together coordinate S-adenosyl-L-methionine. Residues Cys234, Cys237, Cys254, and Cys257 each contribute to the Zn(2+) site.

This sequence belongs to the class I-like SAM-binding methyltransferase superfamily. Trm1 family.

It carries out the reaction guanosine(26) in tRNA + 2 S-adenosyl-L-methionine = N(2)-dimethylguanosine(26) in tRNA + 2 S-adenosyl-L-homocysteine + 2 H(+). In terms of biological role, dimethylates a single guanine residue at position 26 of a number of tRNAs using S-adenosyl-L-methionine as donor of the methyl groups. The protein is tRNA (guanine(26)-N(2))-dimethyltransferase of Natronomonas pharaonis (strain ATCC 35678 / DSM 2160 / CIP 103997 / JCM 8858 / NBRC 14720 / NCIMB 2260 / Gabara) (Halobacterium pharaonis).